Consider the following 322-residue polypeptide: Eukaryotic translation initiation factor 3 subunit I (322 aa).

5 WD repeats span residues 4 to 43 (GHERSITQIKYNREGDLLFSCSKDQKPNVWYSLNGERLGT), 46 to 85 (GHQGAVWCLDVDWESRKLITGAGDMTTKIWDVEYGTIIAS), 141 to 180 (MTESKITSMLWGPLDETIITGHDNGNIAIWDIRKGQKVVD), 184 to 223 (DHTAGINDMQLSKDGTMFVTASKDTTAKLFDSESLMCLKT), and 281 to 322 (GHFG…NIFE).

Belongs to the eIF-3 subunit I family. As to quaternary structure, component of the eukaryotic translation initiation factor 3 (eIF-3) complex. The eIF-3 complex interacts with pix.

It localises to the cytoplasm. Component of the eukaryotic translation initiation factor 3 (eIF-3) complex, which is involved in protein synthesis of a specialized repertoire of mRNAs and, together with other initiation factors, stimulates binding of mRNA and methionyl-tRNAi to the 40S ribosome. The eIF-3 complex specifically targets and initiates translation of a subset of mRNAs involved in cell proliferation. The chain is Eukaryotic translation initiation factor 3 subunit I from Drosophila ananassae (Fruit fly).